The following is a 433-amino-acid chain: Type I acyl-CoA thioesterase mpaH (433 aa).

The interval H58–D246 is abhydrolase domain. V60 serves as a coordination point for substrate. The Nucleophile role is filled by S139. F140 is a substrate binding site. Active-site residues include D163 and H365.

It belongs to the AB hydrolase superfamily. MpaH hydrolase family. In terms of assembly, homodimer.

It is found in the peroxisome matrix. It catalyses the reaction mycophenolyl-CoA + H2O = mycophenolate + CoA + H(+). It participates in secondary metabolite biosynthesis; terpenoid biosynthesis. Type I acyl-CoA thioesterase; part of the gene cluster that mediates the biosynthesis of mycophenolic acid (MPA), the first isolated antibiotic natural product in the world obtained from a culture of Penicillium brevicompactum in 1893. MpaH acts as a peroxisomal acyl-CoA hydrolase that converts MPA-CoA into the final product MPA. The first step of the pathway is the synthesis of 5-methylorsellinic acid (5MOA) by the cytosolic polyketide synthase mpaC. 5MOA is then converted to the phthalide compound 5,7-dihydroxy-4,6-dimethylphthalide (DHMP) by the endoplasmic reticulum-bound cytochrome P450 monooxygenase mpaDE. MpaDE first catalyzes hydroxylation of 5-MOA to 4,6-dihydroxy-2-(hydroxymethyl)-3-methylbenzoic acid (DHMB). MpaDE then acts as a lactone synthase that catalyzes the ring closure to convert DHMB into DHMP. The next step is the prenylation of DHMP by the Golgi apparatus-associated prenyltransferase mpaA to yield farnesyl-DHMP (FDHMP). The ER-bound oxygenase mpaB then mediates the oxidative cleavage the C19-C20 double bond in FDHMP to yield FDHMP-3C via a mycophenolic aldehyde intermediate. The O-methyltransferase mpaG catalyzes the methylation of FDHMP-3C to yield MFDHMP-3C. After the cytosolic methylation of FDHMP-3C, MFDHMP-3C enters into peroxisomes probably via free diffusion due to its low molecular weight. Upon a peroxisomal CoA ligation reaction, catalyzed by a beta-oxidation component enzyme acyl-CoA ligase ACL891, MFDHMP-3C-CoA would then be restricted to peroxisomes for the following beta-oxidation pathway steps. The peroxisomal beta-oxidation machinery than converts MFDHMP-3C-CoA into MPA_CoA, via a beta-oxidation chain-shortening process. Finally mpaH acts as a peroxisomal acyl-CoA hydrolase with high substrate specificity toward MPA-CoA to release the final product MPA. The protein is Type I acyl-CoA thioesterase mpaH of Penicillium brevicompactum.